The sequence spans 133 residues: UPF0292 protein TGAM_1777 (133 aa).

Residues 20-100 (EGALIVEGLR…RVDVETRREL (81 aa)) enclose the Toprim domain. Residues Glu26, Asp69, and Asp71 each coordinate Mg(2+).

The protein belongs to the UPF0292 family. Requires Mg(2+) as cofactor.

This chain is UPF0292 protein TGAM_1777, found in Thermococcus gammatolerans (strain DSM 15229 / JCM 11827 / EJ3).